The chain runs to 213 residues: RNA pyrophosphohydrolase (213 aa).

A Nudix hydrolase domain is found at 6–149 (GFRPNVGIVL…KRGVYEIALT (144 aa)). The short motif at 38 to 59 (GGIDRGETPEQAMIRELHEEVG) is the Nudix box element. Residues 185–213 (NFELPPGGSFEPNPQTSYGLDASGKPHET) are disordered.

The protein belongs to the Nudix hydrolase family. RppH subfamily. A divalent metal cation is required as a cofactor.

Accelerates the degradation of transcripts by removing pyrophosphate from the 5'-end of triphosphorylated RNA, leading to a more labile monophosphorylated state that can stimulate subsequent ribonuclease cleavage. The polypeptide is RNA pyrophosphohydrolase (Albidiferax ferrireducens (strain ATCC BAA-621 / DSM 15236 / T118) (Rhodoferax ferrireducens)).